The sequence spans 443 residues: Ribitol-5-phosphate xylosyltransferase 1 (443 aa).

The Cytoplasmic portion of the chain corresponds to 1-9 (MRLTRKRLC). A helical; Signal-anchor for type II membrane protein membrane pass occupies residues 10-30 (SFLIALYCLFSLYAAYHVFFG). Over 31-443 (RRRQAPAGSP…ESSFLMNNKS (413 aa)) the chain is Extracellular. The disordered stretch occupies residues 35–76 (APAGSPRGLRKGAAPARERRGREQSTLESEEWNPWEGDEKNE). The segment covering 50 to 59 (ARERRGREQS) has biased composition (basic and acidic residues).

This sequence belongs to the RXYLT1 family. Forms a complex composed of FKTN/fukutin, FKRP and RXYLT1/TMEM5.

It localises to the golgi apparatus membrane. It carries out the reaction 3-O-[Rib-ol-P-Rib-ol-P-3-beta-D-GalNAc-(1-&gt;3)-beta-D-GlcNAc-(1-&gt;4)-(O-6-P-alpha-D-Man)]-Thr-[protein] + UDP-alpha-D-xylose = 3-O-[beta-D-Xyl-(1-&gt;4)-Rib-ol-P-Rib-ol-P-3-beta-D-GalNAc-(1-&gt;3)-beta-D-GlcNAc-(1-&gt;4)-(O-6-P-alpha-D-Man)]-Thr-[protein] + UDP + H(+). It functions in the pathway protein modification; protein glycosylation. In terms of biological role, acts as a UDP-D-xylose:ribitol-5-phosphate beta1,4-xylosyltransferase, which catalyzes the transfer of UDP-D-xylose to ribitol 5-phosphate (Rbo5P) to form the Xylbeta1-4Rbo5P linkage on O-mannosyl glycan. Participates in the biosynthesis of the phosphorylated O-mannosyl trisaccharide (N-acetylgalactosamine-beta-3-N-acetylglucosamine-beta-4-(phosphate-6-)mannose), a carbohydrate structure present in alpha-dystroglycan (DAG1), which is required for binding laminin G-like domain-containing extracellular proteins with high affinity. The sequence is that of Ribitol-5-phosphate xylosyltransferase 1 from Homo sapiens (Human).